The following is a 290-amino-acid chain: Pyridoxal 5'-phosphate synthase subunit PdxS (290 aa).

Residue Asp-22 participates in D-ribose 5-phosphate binding. Lys-79 serves as the catalytic Schiff-base intermediate with D-ribose 5-phosphate. Gly-151 is a D-ribose 5-phosphate binding site. Arg-163 contributes to the D-glyceraldehyde 3-phosphate binding site. D-ribose 5-phosphate is bound by residues Gly-212 and 233–234; that span reads GS.

Belongs to the PdxS/SNZ family. In the presence of PdxT, forms a dodecamer of heterodimers.

The catalysed reaction is aldehydo-D-ribose 5-phosphate + D-glyceraldehyde 3-phosphate + L-glutamine = pyridoxal 5'-phosphate + L-glutamate + phosphate + 3 H2O + H(+). The protein operates within cofactor biosynthesis; pyridoxal 5'-phosphate biosynthesis. In terms of biological role, catalyzes the formation of pyridoxal 5'-phosphate from ribose 5-phosphate (RBP), glyceraldehyde 3-phosphate (G3P) and ammonia. The ammonia is provided by the PdxT subunit. Can also use ribulose 5-phosphate and dihydroxyacetone phosphate as substrates, resulting from enzyme-catalyzed isomerization of RBP and G3P, respectively. The protein is Pyridoxal 5'-phosphate synthase subunit PdxS of Clostridium botulinum (strain Langeland / NCTC 10281 / Type F).